We begin with the raw amino-acid sequence, 145 residues long: D-aminoacyl-tRNA deacylase (145 aa).

Residues Gly-137–Pro-138 carry the Gly-cisPro motif, important for rejection of L-amino acids motif.

The protein belongs to the DTD family. In terms of assembly, homodimer.

It is found in the cytoplasm. The catalysed reaction is glycyl-tRNA(Ala) + H2O = tRNA(Ala) + glycine + H(+). It carries out the reaction a D-aminoacyl-tRNA + H2O = a tRNA + a D-alpha-amino acid + H(+). Its function is as follows. An aminoacyl-tRNA editing enzyme that deacylates mischarged D-aminoacyl-tRNAs. Also deacylates mischarged glycyl-tRNA(Ala), protecting cells against glycine mischarging by AlaRS. Acts via tRNA-based rather than protein-based catalysis; rejects L-amino acids rather than detecting D-amino acids in the active site. By recycling D-aminoacyl-tRNA to D-amino acids and free tRNA molecules, this enzyme counteracts the toxicity associated with the formation of D-aminoacyl-tRNA entities in vivo and helps enforce protein L-homochirality. This Lactobacillus acidophilus (strain ATCC 700396 / NCK56 / N2 / NCFM) protein is D-aminoacyl-tRNA deacylase.